A 78-amino-acid chain; its full sequence is Serine rich endogenous peptide 19 (78 aa).

The signal sequence occupies residues 1–25 (MCNIVVFLLTLTLFLFSGLSNTAFA). Positions 50–64 (KIEVDGSCSRRAPGR) match the SCOOP motif motif. A SxS motif essential for MIK2 binding motif is present at residues 56–58 (SCS). The segment at 57–78 (CSRRAPGRRRPPNRPPKPCTKP) is disordered. Positions 69–78 (NRPPKPCTKP) are enriched in pro residues.

Belongs to the serine rich endogenous peptide (SCOOP) phytocytokine family. As to quaternary structure, interacts with MIK2 (via extracellular leucine-rich repeat domain); this interaction triggers the formation of complex between MIK2 and the BAK1/SERK3 and SERK4 coreceptors, and subsequent BAK1 activation by phosphorylation.

It is found in the cell membrane. The protein localises to the secreted. It localises to the extracellular space. Its subcellular location is the apoplast. Brassicaceae-specific phytocytokine (plant endogenous peptide released into the apoplast) perceived by MIK2 in a BAK1/SERK3 and SERK4 coreceptors-dependent manner, that modulates various physiological and antimicrobial processes including growth prevention and reactive oxygen species (ROS) response regulation. The chain is Serine rich endogenous peptide 19 from Arabidopsis thaliana (Mouse-ear cress).